Here is an 86-residue protein sequence, read N- to C-terminus: Cytochrome c oxidase subunit 6B1 (86 aa).

N-acetylalanine is present on Ala-2. A CHCH domain is found at Thr-27–Trp-73. Positions Cys-30 to Cys-40 match the Cx9C motif motif. 2 cysteine pairs are disulfide-bonded: Cys-30-Cys-65 and Cys-40-Cys-54. A Cx10C motif motif is present at residues Cys-54–Cys-65. Lys-62 is modified (N6-acetyllysine).

Belongs to the cytochrome c oxidase subunit 6B family. In terms of assembly, component of the cytochrome c oxidase (complex IV, CIV), a multisubunit enzyme composed of 14 subunits. The complex is composed of a catalytic core of 3 subunits MT-CO1, MT-CO2 and MT-CO3, encoded in the mitochondrial DNA, and 11 supernumerary subunits COX4I1 (or COX4I2), COX5A, COX5B, COX6A2 (or COX6A1), COX6B1 (or COX6B2), COX6C, COX7A1 (or COX7A2), COX7B, COX7C, COX8B and NDUFA4, which are encoded in the nuclear genome. The complex exists as a monomer or a dimer and forms supercomplexes (SCs) in the inner mitochondrial membrane with NADH-ubiquinone oxidoreductase (complex I, CI) and ubiquinol-cytochrome c oxidoreductase (cytochrome b-c1 complex, complex III, CIII), resulting in different assemblies (supercomplex SCI(1)III(2)IV(1) and megacomplex MCI(2)III(2)IV(2)).

It localises to the mitochondrion inner membrane. It participates in energy metabolism; oxidative phosphorylation. Functionally, component of the cytochrome c oxidase, the last enzyme in the mitochondrial electron transport chain which drives oxidative phosphorylation. The respiratory chain contains 3 multisubunit complexes succinate dehydrogenase (complex II, CII), ubiquinol-cytochrome c oxidoreductase (cytochrome b-c1 complex, complex III, CIII) and cytochrome c oxidase (complex IV, CIV), that cooperate to transfer electrons derived from NADH and succinate to molecular oxygen, creating an electrochemical gradient over the inner membrane that drives transmembrane transport and the ATP synthase. Cytochrome c oxidase is the component of the respiratory chain that catalyzes the reduction of oxygen to water. Electrons originating from reduced cytochrome c in the intermembrane space (IMS) are transferred via the dinuclear copper A center (CU(A)) of subunit 2 and heme A of subunit 1 to the active site in subunit 1, a binuclear center (BNC) formed by heme A3 and copper B (CU(B)). The BNC reduces molecular oxygen to 2 water molecules using 4 electrons from cytochrome c in the IMS and 4 protons from the mitochondrial matrix. This chain is Cytochrome c oxidase subunit 6B1 (COX6B1), found in Bos taurus (Bovine).